The sequence spans 756 residues: MFIQRTFLKVLTLLSIVTVLVHGQTQPKDKITLKAVIYDQHKFYNPNFQPKNEGEFVLTKGIVKSDIDQEKRIPVLNSMDANDSINKKARISWPDGFKYFFVDNQAGDSKSAKSGKNLPIQRDIELNWNGEAYEYSNSNYFPINGQGFNDVSYPVPRGYVPISGESWTSMSTSTSLKGNNYNFCLKLNSKFTYNGNEVFKFTGDDDVWVYINNKLVVDIGGIHSQVSASVDVTKLGLTVGTIYNFDFFYCERKTSESNIKIQTTIETYCAYVDYCGVCEGDGSTCCNPATTCNDGKRCTNDFCPDPKSPLAGKDISKYCDHIPVKTCSSKDTLCKQYTCSDDLKGDMCVIKNTVTCPGNQTNCEASGYCDDKFGCINPSKCTDYIGQCFSGKCVNGECAKVTADDCEKIIGGVCRSDYVCEPGLGCKSSERCRQGSDICDLVTCDPKATDESKRCITTVLTDEECRCCEYDTLRFCEQAACSNKTGLCQPIPKNVDDGNLCTIDACNEDEKTITHVQVTCGGCETCSYATGKCEPDSSLCNDNNICTIDICVHEGILDGLPQGNCSNTPVDCGANDEDKCKTWSCDPTKGGCQSTPVVCEDKGKCLVGTCQPSTGQCEYSDRVCDNGGAFCVIGQCDQRLGCLVFDRVCSSDNSRCEEGVCVNGTESEEGHCKSVKYDPLPFNCNTGAVVSTAVIAGSTVAGAVALGIFLYGGKKGYDYWKDSRNISMGSSNSNPLYEEQQTGRGVNPMYDDPAAN.

The signal sequence occupies residues 1 to 23; that stretch reads MFIQRTFLKVLTLLSIVTVLVHG. The Extracellular segment spans residues 24–692; it reads QTQPKDKITL…NCNTGAVVST (669 aa). N-linked (GlcNAc...) asparagine glycosylation occurs at Asn82. The PA14 domain maps to 126–281; sequence LNWNGEAYEY…VDYCGVCEGD (156 aa). Asn359, Asn483, Asn564, and Asn663 each carry an N-linked (GlcNAc...) asparagine glycan. The chain crosses the membrane as a helical span at residues 693–713; sequence AVIAGSTVAGAVALGIFLYGG. The Cytoplasmic portion of the chain corresponds to 714-756; it reads KKGYDYWKDSRNISMGSSNSNPLYEEQQTGRGVNPMYDDPAAN. Over residues 730-744 the composition is skewed to polar residues; it reads SSNSNPLYEEQQTGR. Positions 730-756 are disordered; that stretch reads SSNSNPLYEEQQTGRGVNPMYDDPAAN.

The protein belongs to the prespore-cell-inducing factor family.

The protein localises to the membrane. This is Protein psiP (psiP) from Dictyostelium discoideum (Social amoeba).